We begin with the raw amino-acid sequence, 460 residues long: tRNA hydroxylation protein P (460 aa).

It belongs to the peptidase U32 family.

Its function is as follows. Involved in prephenate-dependent formation of 5-hydroxyuridine (ho5U) modification at position 34 in tRNAs, the first step in 5-carboxymethoxyuridine (cmo5U) biosynthesis. In Haemophilus influenzae (strain ATCC 51907 / DSM 11121 / KW20 / Rd), this protein is tRNA hydroxylation protein P.